A 490-amino-acid chain; its full sequence is MESGSKMTARLMLAVGGAVLGSLQFGYNTGVINRPQKVIEDFYNHTWLYRYEEPISPATLTTLWSLSVAIFSVGGMIGSFSVGLFVNRFGRRNSMLMSNILAFLAAVLMGFSKMALSFEMLILGRFIIGLYSGLTTGFVPMYVGEVSPTALRGALGTFHQLGIVLGILIAQVFGLDLIMGNDSLWPLLLGFIFVPALLQCIILPFAPESPRFLLINRNEENKAKSVLKKLRGTTDVSSDLQEMKEESRQMMREKKVTIMELFRSPMYRQPILIAIVLQLSQQLSGINAVFYYSTSIFEKSGVEQPVYATIGSGVVNTAFTVVSLFVVERAGRRTLHLIGLAGMAGCAILMTIALTLLDQMPWMSYLSIVAIFGFVAFFEIGPGPIPWFIVAELFSQGPRPAAFAVAGLSNWTSNFIVGMGFQYIAQLCGSYVFIIFTVLLVLFFIFTYFKVPETKGRTFDEIAYRFRQGGASQSDKTPDEFHSLGADSQV.

Residues 1–10 (MESGSKMTAR) lie on the Cytoplasmic side of the membrane. Residues 11 to 32 (LMLAVGGAVLGSLQFGYNTGVI) traverse the membrane as a helical segment. Residues 33 to 65 (NRPQKVIEDFYNHTWLYRYEEPISPATLTTLWS) are Extracellular-facing. Asn-44 carries an N-linked (GlcNAc...) asparagine glycan. A helical transmembrane segment spans residues 66–86 (LSVAIFSVGGMIGSFSVGLFV). Residues 87–89 (NRF) are Cytoplasmic-facing. The helical transmembrane segment at 90 to 111 (GRRNSMLMSNILAFLAAVLMGF) threads the bilayer. The Extracellular portion of the chain corresponds to 112–119 (SKMALSFE). Residues 120 to 143 (MLILGRFIIGLYSGLTTGFVPMYV) form a helical membrane-spanning segment. Over 144 to 154 (GEVSPTALRGA) the chain is Cytoplasmic. The helical transmembrane segment at 155 to 175 (LGTFHQLGIVLGILIAQVFGL) threads the bilayer. Gln-160 contacts D-glucose. Residues 176–184 (DLIMGNDSL) are Extracellular-facing. A helical membrane pass occupies residues 185-205 (WPLLLGFIFVPALLQCIILPF). Residues 206–270 (APESPRFLLI…LFRSPMYRQP (65 aa)) lie on the Cytoplasmic side of the membrane. The helical transmembrane segment at 271-292 (ILIAIVLQLSQQLSGINAVFYY) threads the bilayer. D-glucose contacts are provided by residues 281-282 (QQ) and Asn-287. Residues 293–305 (STSIFEKSGVEQP) are Extracellular-facing. A helical membrane pass occupies residues 306 to 327 (VYATIGSGVVNTAFTVVSLFVV). Asn-316 is a binding site for D-glucose. Topologically, residues 328–333 (ERAGRR) are cytoplasmic. A helical transmembrane segment spans residues 334–354 (TLHLIGLAGMAGCAILMTIAL). Topologically, residues 355-364 (TLLDQMPWMS) are extracellular. Residues 365-387 (YLSIVAIFGFVAFFEIGPGPIPW) traverse the membrane as a helical segment. D-glucose-binding residues include Glu-379 and Trp-387. The Cytoplasmic segment spans residues 388-400 (FIVAELFSQGPRP). Residues 401-421 (AAFAVAGLSNWTSNFIVGMGF) form a helical membrane-spanning segment. The Extracellular portion of the chain corresponds to 422–428 (QYIAQLC). The helical transmembrane segment at 429 to 449 (GSYVFIIFTVLLVLFFIFTYF) threads the bilayer. The Cytoplasmic segment spans residues 450–490 (KVPETKGRTFDEIAYRFRQGGASQSDKTPDEFHSLGADSQV). Residues 470–490 (GASQSDKTPDEFHSLGADSQV) form a disordered region.

Belongs to the major facilitator superfamily. Sugar transporter (TC 2.A.1.1) family. Glucose transporter subfamily. In terms of assembly, interacts with isoform 1 of BSG. In terms of tissue distribution, retinal cones (at protein level).

It localises to the cell membrane. The protein resides in the photoreceptor inner segment. It catalyses the reaction D-glucose(out) = D-glucose(in). Functionally, facilitative glucose transporter, which is responsible for constitutive or basal glucose uptake. Has a very broad substrate specificity; can transport a wide range of aldoses including both pentoses and hexoses. Most important energy carrier of the brain: present at the blood-brain barrier and assures the energy-independent, facilitative transport of glucose into the brain. In association with BSG and NXNL1, promotes retinal cone survival by increasing glucose uptake into photoreceptors. Required for mesendoderm differentiation. This is Solute carrier family 2, facilitated glucose transporter member 1 from Gallus gallus (Chicken).